We begin with the raw amino-acid sequence, 447 residues long: Probable glycine dehydrogenase (decarboxylating) subunit 1 (447 aa).

It belongs to the GcvP family. N-terminal subunit subfamily. As to quaternary structure, the glycine cleavage system is composed of four proteins: P, T, L and H. In this organism, the P 'protein' is a heterodimer of two subunits.

It carries out the reaction N(6)-[(R)-lipoyl]-L-lysyl-[glycine-cleavage complex H protein] + glycine + H(+) = N(6)-[(R)-S(8)-aminomethyldihydrolipoyl]-L-lysyl-[glycine-cleavage complex H protein] + CO2. In terms of biological role, the glycine cleavage system catalyzes the degradation of glycine. The P protein binds the alpha-amino group of glycine through its pyridoxal phosphate cofactor; CO(2) is released and the remaining methylamine moiety is then transferred to the lipoamide cofactor of the H protein. The sequence is that of Probable glycine dehydrogenase (decarboxylating) subunit 1 from Azorhizobium caulinodans (strain ATCC 43989 / DSM 5975 / JCM 20966 / LMG 6465 / NBRC 14845 / NCIMB 13405 / ORS 571).